Here is a 563-residue protein sequence, read N- to C-terminus: Heat shock 70 kDa protein 8 (563 aa).

Positions 1–25 (MAEAAYTVASDSENTGEEKSSSSPS) are disordered. Residue alanine 2 is modified to N-acetylalanine.

Belongs to the heat shock protein 70 (TC 1.A.33) family. DnaK subfamily.

Functionally, in cooperation with other chaperones, Hsp70s are key components that facilitate folding of de novo synthesized proteins, assist translocation of precursor proteins into organelles, and are responsible for degradation of damaged protein under stress conditions. The sequence is that of Heat shock 70 kDa protein 8 (HSP70-8) from Arabidopsis thaliana (Mouse-ear cress).